The primary structure comprises 1889 residues: Bromodomain adjacent to zinc finger domain protein 2A (1889 aa).

3 disordered regions span residues 1-59 (MEME…NGLS), 384-433 (FGLN…SPAA), and 479-526 (TTPV…GAVA). The segment covering 35-59 (TNGSPMNFPQQGKSLNGDVNVNGLS) has biased composition (polar residues). The segment at 332–726 (EGNPVISALD…ESQTPVQGQA (395 aa)) is required for TTF1 binding. A compositionally biased stretch (low complexity) spans 423 to 433 (PAVSPTASPAA). Polar residues-rich tracts occupy residues 479 to 489 (TTPVTSPQGSP) and 498 to 509 (QTVSPARKNVSS). Threonine 499 carries the phosphothreonine modification. Serine 501 is subject to Phosphoserine. Residues 538–609 (IATPEEVRLP…EHFSFSPRMP (72 aa)) form the MBD domain. Threonine 540 is modified (phosphothreonine). Serine 605 bears the Phosphoserine mark. A disordered region spans residues 638-791 (QAITGKRGRP…ARPSCRADKT (154 aa)). 2 consecutive DNA-binding regions (a.T hook) follow at residues 641–653 (TGKRGRPRNNEKA) and 662–674 (KRGRGRPPKIKMP). The span at 648–660 (RNNEKAKNKEVPK) shows a compositional bias: basic and acidic residues. Over residues 661-670 (VKRGRGRPPK) the composition is skewed to basic residues. Lysine 672 bears the N6-acetyllysine; by KAT8 mark. Residues 678–701 (NKTDNRLPKKLETQEILSEDDKAK) show a composition bias toward basic and acidic residues. A coiled-coil region spans residues 686 to 813 (KKLETQEILS…QQAILEEMKK (128 aa)). Residues 702-713 (MTKNKKKMRQKV) are compositionally biased toward basic residues. The span at 716-726 (GESQTPVQGQA) shows a compositional bias: polar residues. 2 stretches are compositionally biased toward basic and acidic residues: residues 731–740 (KQDTKSLKQK) and 748–791 (AEKE…ADKT). Position 790 is an N6-acetyllysine (lysine 790). Positions 839–904 (SRAFSDCLTI…LKAALHDPGL (66 aa)) constitute a DDT domain. A Glycyl lysine isopeptide (Lys-Gly) (interchain with G-Cter in SUMO2) cross-link involves residue lysine 857. The segment at 1039–1063 (EETSGIEEEEEEENTTAVHGRRGRK) is disordered. Serine 1042 bears the Phosphoserine mark. Positions 1042–1052 (SGIEEEEEEEN) are enriched in acidic residues. Glycyl lysine isopeptide (Lys-Gly) (interchain with G-Cter in SUMO2) cross-links involve residues lysine 1141 and lysine 1163. Disordered stretches follow at residues 1147 to 1247 (LMEV…GQSQ) and 1269 to 1397 (LSSS…GRPP). Residue serine 1174 is modified to Phosphoserine. The a.T hook 3 DNA-binding region spans 1176–1188 (ARSRGRPRKPKPG). 3 stretches are compositionally biased toward polar residues: residues 1190 to 1231 (LQPQ…QPSS), 1269 to 1278 (LSSSVLTPDS), and 1331 to 1346 (DQPTPSLQLLASSKPM). Phosphoserine is present on residues serine 1374, serine 1377, and serine 1383. The a.T hook 4 DNA-binding region spans 1390 to 1402 (PKRRGRPPSKFFK). Phosphoserine is present on serine 1545. Residues lysine 1662 and lysine 1695 each participate in a glycyl lysine isopeptide (Lys-Gly) (interchain with G-Cter in SUMO2) cross-link. The PHD-type zinc-finger motif lies at 1662 to 1712 (KVTCLVCRKGDNDEFLLLCDGCDRGCHIYCHRPKMEAVPEGDWFCAVCLSQ). Residues 1720 to 1778 (QRPGFPKRGQKRKSSFPLTFPEGDSRRRMLSRSRDSPAVPRYPEDGLSPPKRRRHSMRS) form a disordered region. Serine 1733 bears the Phosphoserine mark. A Phosphothreonine modification is found at threonine 1738. Positions 1742 to 1754 (GDSRRRMLSRSRD) are enriched in basic and acidic residues. Phosphoserine is present on residues serine 1755 and serine 1767. The segment covering 1769-1778 (PKRRRHSMRS) has biased composition (basic residues). The 105-residue stretch at 1777–1881 (RSHHSDLTFC…RFFESRWEEF (105 aa)) folds into the Bromo domain.

Belongs to the WAL family. Component of the NoRC-1 ISWI chromatin remodeling complex at least composed of SMARCA1 and BAZ2A/TIP5, which regulates the spacing of histone octamers on the DNA template to facilitate access to DNA. Within the NoRC-1 ISWI chromatin remodeling complex interacts with SMARCA1; the interaction is direct. Component of the NoRC-5 ISWI chromatin remodeling complex (also called the NoRC nucleolar-remodeling complex), at least composed of SMARCA5/SNF2H and BAZ2A/TIP5, which regulates the spacing of histone octamers on the DNA template to facilitate access to DNA. Within the NoRC-5 ISWI chromatin remodeling complexes interacts with SMARCA5/SNF2H; the interaction is direct. Interacts with TTF1; the interaction is required for recruitment of the NoRC-5 ISWI chromatin remodeling complex to rDNA. Interacts with HDAC1. Interacts with SIN3A. Interacts with DNMT1 and DNM3B. Interacts with BEND3 and USP21. In terms of processing, ubiquitinated. Deubiquitinated by USP21 leading to its stabilization. Acetylation at Lys-672 by KAT8/MOF promotes its dissociation from pRNA, affecting heterochromatin formation, nucleosome positioning and rDNA silencing. Deacetylation by SIRT1 in late S phase enhances pRNA-binding, allowing de novo DNA methylation and heterochromatin formation. Acetylation is high during S phase and declines to background levels in late S phase when the silent copies of rRNA genes are replicated.

It localises to the nucleus. Its subcellular location is the nucleolus. Regulatory subunit of the ATP-dependent NoRC-1 and NoRC-5 ISWI chromatin remodeling complexes, which form ordered nucleosome arrays on chromatin and facilitate access to DNA during DNA-templated processes such as DNA replication, transcription, and repair. Both complexes regulate the spacing of nucleosomes along the chromatin and have the ability to slide mononucleosomes to the center of a DNA template. Directly stimulates the ATPase activity of SMARCA5 in the NoRC-5 ISWI chromatin remodeling complex. The NoRC-1 ISWI chromatin remodeling complex has a lower ATP hydrolysis rate than the NoRC-5 ISWI chromatin remodeling complex. Within the NoRC-5 ISWI chromatin remodeling complex, mediates silencing of a fraction of rDNA by recruiting histone-modifying enzymes and DNA methyltransferases, leading to heterochromatin formation and transcriptional silencing. In the complex, it plays a central role by being recruited to rDNA and by targeting chromatin modifying enzymes such as HDAC1, leading to repress RNA polymerase I transcription. Recruited to rDNA via its interaction with TTF1 and its ability to recognize and bind histone H4 acetylated on 'Lys-16' (H4K16ac), leading to deacetylation of H4K5ac, H4K8ac, H4K12ac but not H4K16ac. Specifically binds pRNAs, 150-250 nucleotide RNAs that are complementary in sequence to the rDNA promoter; pRNA-binding is required for heterochromatin formation and rDNA silencing. This Mus musculus (Mouse) protein is Bromodomain adjacent to zinc finger domain protein 2A (Baz2a).